A 406-amino-acid chain; its full sequence is Arginine biosynthesis bifunctional protein ArgJ (406 aa).

Residues Thr-156, Lys-182, Thr-193, Glu-279, Asn-401, and Thr-406 each coordinate substrate. The active-site Nucleophile is Thr-193.

Belongs to the ArgJ family. As to quaternary structure, heterotetramer of two alpha and two beta chains.

The protein localises to the cytoplasm. The catalysed reaction is N(2)-acetyl-L-ornithine + L-glutamate = N-acetyl-L-glutamate + L-ornithine. The enzyme catalyses L-glutamate + acetyl-CoA = N-acetyl-L-glutamate + CoA + H(+). It participates in amino-acid biosynthesis; L-arginine biosynthesis; L-ornithine and N-acetyl-L-glutamate from L-glutamate and N(2)-acetyl-L-ornithine (cyclic): step 1/1. Its pathway is amino-acid biosynthesis; L-arginine biosynthesis; N(2)-acetyl-L-ornithine from L-glutamate: step 1/4. Feedback inhibition by L-arginine. Catalyzes two activities which are involved in the cyclic version of arginine biosynthesis: the synthesis of N-acetylglutamate from glutamate and acetyl-CoA as the acetyl donor, and of ornithine by transacetylation between N(2)-acetylornithine and glutamate. In Bacillus amyloliquefaciens (Bacillus velezensis), this protein is Arginine biosynthesis bifunctional protein ArgJ.